The sequence spans 586 residues: Phosphomethylpyrimidine synthase (586 aa).

The interval 1–59 is disordered; the sequence is MKQSVSAEQIELKSSLPGSKKVYVDGPREGMKVPMREIEQSDTNGVPNPPIRVYDTSGP. Residues 22 to 39 show a composition bias toward basic and acidic residues; sequence VYVDGPREGMKVPMREIE. Residues Asn-193, Met-222, Tyr-251, His-287, 307-309, 348-351, and Glu-387 contribute to the substrate site; these read SRG and DGLR. His-391 is a Zn(2+) binding site. Residue Tyr-414 coordinates substrate. Residue His-455 participates in Zn(2+) binding. 3 residues coordinate [4Fe-4S] cluster: Cys-535, Cys-538, and Cys-543.

It belongs to the ThiC family. [4Fe-4S] cluster serves as cofactor.

It catalyses the reaction 5-amino-1-(5-phospho-beta-D-ribosyl)imidazole + S-adenosyl-L-methionine = 4-amino-2-methyl-5-(phosphooxymethyl)pyrimidine + CO + 5'-deoxyadenosine + formate + L-methionine + 3 H(+). The protein operates within cofactor biosynthesis; thiamine diphosphate biosynthesis. Catalyzes the synthesis of the hydroxymethylpyrimidine phosphate (HMP-P) moiety of thiamine from aminoimidazole ribotide (AIR) in a radical S-adenosyl-L-methionine (SAM)-dependent reaction. The chain is Phosphomethylpyrimidine synthase from Bacillus cereus (strain ATCC 10987 / NRS 248).